Reading from the N-terminus, the 226-residue chain is Urease accessory protein UreF (226 aa).

Belongs to the UreF family. UreD, UreF and UreG form a complex that acts as a GTP-hydrolysis-dependent molecular chaperone, activating the urease apoprotein by helping to assemble the nickel containing metallocenter of UreC. The UreE protein probably delivers the nickel.

It localises to the cytoplasm. In terms of biological role, required for maturation of urease via the functional incorporation of the urease nickel metallocenter. The chain is Urease accessory protein UreF from Burkholderia multivorans (strain ATCC 17616 / 249).